Here is a 28-residue protein sequence, read N- to C-terminus: Aspartate aminotransferase, mitochondrial (28 aa).

Belongs to the class-I pyridoxal-phosphate-dependent aminotransferase family. In terms of assembly, homodimer. It depends on pyridoxal 5'-phosphate as a cofactor.

Its subcellular location is the mitochondrion matrix. It catalyses the reaction L-aspartate + 2-oxoglutarate = oxaloacetate + L-glutamate. Its function is as follows. Plays a key role in amino acid metabolism. Important for metabolite exchange between mitochondria and cytosol. The polypeptide is Aspartate aminotransferase, mitochondrial (Catharanthus roseus (Madagascar periwinkle)).